The chain runs to 248 residues: Ubiquinone/menaquinone biosynthesis C-methyltransferase UbiE (248 aa).

S-adenosyl-L-methionine contacts are provided by Ser68 and Asp92.

Belongs to the class I-like SAM-binding methyltransferase superfamily. MenG/UbiE family.

The catalysed reaction is a 2-demethylmenaquinol + S-adenosyl-L-methionine = a menaquinol + S-adenosyl-L-homocysteine + H(+). It catalyses the reaction a 2-methoxy-6-(all-trans-polyprenyl)benzene-1,4-diol + S-adenosyl-L-methionine = a 5-methoxy-2-methyl-3-(all-trans-polyprenyl)benzene-1,4-diol + S-adenosyl-L-homocysteine + H(+). Its pathway is quinol/quinone metabolism; menaquinone biosynthesis; menaquinol from 1,4-dihydroxy-2-naphthoate: step 2/2. The protein operates within cofactor biosynthesis; ubiquinone biosynthesis. Its function is as follows. Methyltransferase required for the conversion of demethylmenaquinol (DMKH2) to menaquinol (MKH2) and the conversion of 2-polyprenyl-6-methoxy-1,4-benzoquinol (DDMQH2) to 2-polyprenyl-3-methyl-6-methoxy-1,4-benzoquinol (DMQH2). The chain is Ubiquinone/menaquinone biosynthesis C-methyltransferase UbiE from Rickettsia peacockii (strain Rustic).